The following is a 95-amino-acid chain: UPF0235 protein Sama_2480 (95 aa).

It belongs to the UPF0235 family.

The polypeptide is UPF0235 protein Sama_2480 (Shewanella amazonensis (strain ATCC BAA-1098 / SB2B)).